A 93-amino-acid chain; its full sequence is Small ribosomal subunit protein uS19 (93 aa).

It belongs to the universal ribosomal protein uS19 family.

Protein S19 forms a complex with S13 that binds strongly to the 16S ribosomal RNA. The sequence is that of Small ribosomal subunit protein uS19 from Pseudarthrobacter chlorophenolicus (strain ATCC 700700 / DSM 12829 / CIP 107037 / JCM 12360 / KCTC 9906 / NCIMB 13794 / A6) (Arthrobacter chlorophenolicus).